The sequence spans 224 residues: Proteasome subunit beta (224 aa).

A propeptide spans 1-6 (MDVMKG) (removed in mature form; by autocatalysis). Catalysis depends on T7, which acts as the Nucleophile.

The protein belongs to the peptidase T1B family. In terms of assembly, the 20S proteasome core is composed of 14 alpha and 14 beta subunits that assemble into four stacked heptameric rings, resulting in a barrel-shaped structure. The two inner rings, each composed of seven catalytic beta subunits, are sandwiched by two outer rings, each composed of seven alpha subunits. The catalytic chamber with the active sites is on the inside of the barrel. Has a gated structure, the ends of the cylinder being occluded by the N-termini of the alpha-subunits. Is capped at one or both ends by the proteasome regulatory ATPase, PAN.

The protein localises to the cytoplasm. It carries out the reaction Cleavage of peptide bonds with very broad specificity.. With respect to regulation, the formation of the proteasomal ATPase PAN-20S proteasome complex, via the docking of the C-termini of PAN into the intersubunit pockets in the alpha-rings, triggers opening of the gate for substrate entry. Interconversion between the open-gate and close-gate conformations leads to a dynamic regulation of the 20S proteasome proteolysis activity. Component of the proteasome core, a large protease complex with broad specificity involved in protein degradation. The protein is Proteasome subunit beta of Methanocaldococcus fervens (strain DSM 4213 / JCM 15782 / AG86) (Methanococcus fervens).